The sequence spans 509 residues: O-acetyltransferase anaAT (509 aa).

Belongs to the fumigaclavine B O-acetyltransferase family. Monomer.

It carries out the reaction (2R,3S,11R)-aszonalenin + acetyl-CoA = (2R,3S,11R)-acetylaszonalenin + CoA. The protein operates within alkaloid biosynthesis. In terms of biological role, O-acetyltransferase; part of the gene cluster that mediates the biosynthesis of the prenylated pyrroloindoline diketopiperazine acetylaszonalenin. The first step in the pathway is the formation of (R)-benzodiazepinedione by condensation of tryptophan and anthranilic acid catalyzed by the non-ribosomal peptide synthetase anaPS. The prenyltransferase anaPT then converts (R)-benzodiazepinedione to aszonalenin in the presence of dimethylallyl diphosphate (DMAPP) via C3-prenylation. The last step in the biosynthesis of acetylaszonalenin via acetylation of aszonalenin at position N1 catalyzed by anaAT. This is O-acetyltransferase anaAT from Neosartorya fischeri (strain ATCC 1020 / DSM 3700 / CBS 544.65 / FGSC A1164 / JCM 1740 / NRRL 181 / WB 181) (Aspergillus fischerianus).